Reading from the N-terminus, the 143-residue chain is uncharacterized protein (143 aa).

The protein belongs to the OsmC/Ohr family.

This is an uncharacterized protein from Acinetobacter baylyi (strain ATCC 33305 / BD413 / ADP1).